Here is a 351-residue protein sequence, read N- to C-terminus: Cobalt-precorrin-5B C(1)-methyltransferase (351 aa).

Belongs to the CbiD family.

It catalyses the reaction Co-precorrin-5B + S-adenosyl-L-methionine = Co-precorrin-6A + S-adenosyl-L-homocysteine. The protein operates within cofactor biosynthesis; adenosylcobalamin biosynthesis; cob(II)yrinate a,c-diamide from sirohydrochlorin (anaerobic route): step 6/10. Catalyzes the methylation of C-1 in cobalt-precorrin-5B to form cobalt-precorrin-6A. This is Cobalt-precorrin-5B C(1)-methyltransferase from Thermosipho africanus (strain TCF52B).